The primary structure comprises 85 residues: uncharacterized protein (85 aa).

The protein to A.fulgidus AF_0255 and AF_1363.

This is an uncharacterized protein from Archaeoglobus fulgidus (strain ATCC 49558 / DSM 4304 / JCM 9628 / NBRC 100126 / VC-16).